The following is a 29-amino-acid chain: Cyclotide vibi-A (29 aa).

The segment at residues 1–29 (GLPVCGETCFGGTCNTPGCSCSYPICTRN) is a cross-link (cyclopeptide (Gly-Asn)). 3 cysteine pairs are disulfide-bonded: Cys-5–Cys-19, Cys-9–Cys-21, and Cys-14–Cys-26.

This is a cyclic peptide.

Probably participates in a plant defense mechanism. This is Cyclotide vibi-A from Viola biflora (Yellow wood violet).